The following is a 355-amino-acid chain: Double-stranded RNA-binding protein 4 (355 aa).

DRBM domains are found at residues 4–73 (VYKG…SLTP) and 82–150 (AYKN…SIKN). Polar residues predominate over residues 149–188 (KNGNSNQTGSPTLPSERQEDVNSNVKSSPQEIHSQPSSKV). Positions 149 to 193 (KNGNSNQTGSPTLPSERQEDVNSNVKSSPQEIHSQPSSKVVMTPD) are disordered.

In terms of assembly, heterodimer with DRB1 or DRB5. Interacts with DCL4 and cauliflower mosaic virus (CaMV) transactivator/viroplasmin protein. Interaction with CaMV transactivator/viroplasmin protein inhibits RNA silencing ability of DRB4. Expressed in roots, leaf vasculature, shoot apical meristem (SAM) and developing anthers.

Its subcellular location is the nucleus. Double-stranded RNA-binding protein involved in RNA-mediated post-transcriptional gene silencing (PTGS). Functions in the trans-acting small interfering RNAs (ta-siRNAs) biogenesis by binding and assisting DICER-LIKE 4 (DCL4). Required for DCL4 activity. Required for the 21 nucleotide ta-siRNAs production of the TAS3 transcript in leaves but not in flowers. Plays an important role in silencing RNA of both DNA and RNA viruses. Involved with argonaute 7 (AGO7) and RDR6 in turnip crinkle virus (TCV) silencing. May not be directly involved in viral siRNA production. May stabilize the 21 nucleotide viral siRNAs and deliver them to the RISC complex. Targeted by the viral silencing suppressor (VSR) transactivator/viroplasmin (TAV) protein of the cauliflower mosaic virus (CaMV) that inactivates DRB4 function in RNA silencing. Probably not involved in the guide strand selection from RNA duplexes. Involved in leaf morphology through its function in ta-siRNA-mediated silencing. This is Double-stranded RNA-binding protein 4 (DBR4) from Arabidopsis thaliana (Mouse-ear cress).